A 375-amino-acid polypeptide reads, in one-letter code: Deoxyhypusine synthase-like protein (375 aa).

It belongs to the deoxyhypusine synthase family.

This chain is Deoxyhypusine synthase-like protein, found in Elusimicrobium minutum (strain Pei191).